The primary structure comprises 424 residues: Glutamyl-tRNA reductase (424 aa).

Substrate is bound by residues 49–52 (TCNR), serine 107, 112–114 (EPQ), and glutamine 118. The active-site Nucleophile is the cysteine 50. 187–192 (GAGETI) is a binding site for NADP(+).

Belongs to the glutamyl-tRNA reductase family. As to quaternary structure, homodimer.

The enzyme catalyses (S)-4-amino-5-oxopentanoate + tRNA(Glu) + NADP(+) = L-glutamyl-tRNA(Glu) + NADPH + H(+). Its pathway is porphyrin-containing compound metabolism; protoporphyrin-IX biosynthesis; 5-aminolevulinate from L-glutamyl-tRNA(Glu): step 1/2. Functionally, catalyzes the NADPH-dependent reduction of glutamyl-tRNA(Glu) to glutamate 1-semialdehyde (GSA). This chain is Glutamyl-tRNA reductase, found in Chromohalobacter salexigens (strain ATCC BAA-138 / DSM 3043 / CIP 106854 / NCIMB 13768 / 1H11).